Here is a 152-residue protein sequence, read N- to C-terminus: Small ribosomal subunit protein uS15 (152 aa).

The segment covering 1–11 (MARMHARRRGK) has biased composition (basic residues). The tract at residues 1-25 (MARMHARRRGKSSSVRPARNEAPAW) is disordered.

This sequence belongs to the universal ribosomal protein uS15 family. As to quaternary structure, part of the 30S ribosomal subunit.

The protein is Small ribosomal subunit protein uS15 of Methanoregula boonei (strain DSM 21154 / JCM 14090 / 6A8).